We begin with the raw amino-acid sequence, 105 residues long: Nucleoid-associated protein Ccur92_18190 (105 aa).

It belongs to the YbaB/EbfC family. In terms of assembly, homodimer.

It localises to the cytoplasm. The protein resides in the nucleoid. Its function is as follows. Binds to DNA and alters its conformation. May be involved in regulation of gene expression, nucleoid organization and DNA protection. The chain is Nucleoid-associated protein Ccur92_18190 from Campylobacter curvus (strain 525.92).